Here is a 310-residue protein sequence, read N- to C-terminus: Olfactory receptor 10N1 (310 aa).

At 1-23 the chain is on the extracellular side; the sequence is MDNYTLLNEFILLGIPQTQGLET. An N-linked (GlcNAc...) asparagine glycan is attached at asparagine 3. A helical transmembrane segment spans residues 24–44; it reads LLFVVFLFIYFFTLLGNSLIF. Over 45 to 55 the chain is Cytoplasmic; sequence TAIISSSTLHT. The chain crosses the membrane as a helical span at residues 56 to 76; sequence PMYFFLGLLSVFDMLFPSVTC. Topologically, residues 77 to 95 are extracellular; that stretch reads PKMLFYLSVRSPAISYKGC. Cysteine 95 and cysteine 187 form a disulfide bridge. A helical transmembrane segment spans residues 96-116; sequence AAQLFFYHLLGSTEGCLYSVM. At 117–136 the chain is on the cytoplasmic side; the sequence is AYDRYVAICHPLRYMLIMKP. A helical transmembrane segment spans residues 137-157; that stretch reads GVCVSLVIIAWLVGCLHATIL. Residues 158-202 are Extracellular-facing; the sequence is TSLTFQLVYCASNQVDYFFCDLPAVLPLACTDSKLARKVGSINVG. A helical membrane pass occupies residues 203-223; it reads FLALMLLFSVCVSYVHIGVAI. Residues 224-237 are Cytoplasmic-facing; it reads LRIRSAEGRQKAFS. Residues 238–258 form a helical membrane-spanning segment; sequence TCSAHLTAILCAYGPVIIIYL. Residues 259–264 are Extracellular-facing; sequence QRTPNP. The helical transmembrane segment at 265 to 285 threads the bilayer; sequence LLGAVVQILNNIVSPMLNSLI. Residues 286-310 lie on the Cytoplasmic side of the membrane; sequence YSLRNKEVKRSLRRVFQNITFHGQK.

It belongs to the G-protein coupled receptor 1 family.

The protein localises to the cell membrane. Functionally, odorant receptor. This is Olfactory receptor 10N1 from Mus musculus (Mouse).